The primary structure comprises 196 residues: Imidazole glycerol phosphate synthase subunit HisH (196 aa).

Positions Asn2–Cys196 constitute a Glutamine amidotransferase type-1 domain. The active-site Nucleophile is Cys77. Catalysis depends on residues His175 and Glu177.

Heterodimer of HisH and HisF.

The protein resides in the cytoplasm. The enzyme catalyses 5-[(5-phospho-1-deoxy-D-ribulos-1-ylimino)methylamino]-1-(5-phospho-beta-D-ribosyl)imidazole-4-carboxamide + L-glutamine = D-erythro-1-(imidazol-4-yl)glycerol 3-phosphate + 5-amino-1-(5-phospho-beta-D-ribosyl)imidazole-4-carboxamide + L-glutamate + H(+). It catalyses the reaction L-glutamine + H2O = L-glutamate + NH4(+). Its pathway is amino-acid biosynthesis; L-histidine biosynthesis; L-histidine from 5-phospho-alpha-D-ribose 1-diphosphate: step 5/9. Functionally, IGPS catalyzes the conversion of PRFAR and glutamine to IGP, AICAR and glutamate. The HisH subunit catalyzes the hydrolysis of glutamine to glutamate and ammonia as part of the synthesis of IGP and AICAR. The resulting ammonia molecule is channeled to the active site of HisF. The sequence is that of Imidazole glycerol phosphate synthase subunit HisH from Idiomarina loihiensis (strain ATCC BAA-735 / DSM 15497 / L2-TR).